The chain runs to 410 residues: Arginine deiminase (410 aa).

C399 acts as the Amidino-cysteine intermediate in catalysis.

It belongs to the arginine deiminase family.

Its subcellular location is the cytoplasm. The catalysed reaction is L-arginine + H2O = L-citrulline + NH4(+). It participates in amino-acid degradation; L-arginine degradation via ADI pathway; carbamoyl phosphate from L-arginine: step 1/2. The polypeptide is Arginine deiminase (Treponema denticola (strain ATCC 35405 / DSM 14222 / CIP 103919 / JCM 8153 / KCTC 15104)).